The primary structure comprises 227 residues: Fibrillarin-like rRNA/tRNA 2'-O-methyltransferase (227 aa).

Residues 82–83 (TT), 100–101 (EF), 125–126 (DA), and 145–148 (DVAQ) each bind S-adenosyl-L-methionine.

It belongs to the methyltransferase superfamily. Fibrillarin family. As to quaternary structure, interacts with nop5. Component of box C/D small ribonucleoprotein (sRNP) particles that contain rpl7ae, FlpA and nop5, plus a guide RNA.

Functionally, involved in pre-rRNA and tRNA processing. Utilizes the methyl donor S-adenosyl-L-methionine to catalyze the site-specific 2'-hydroxyl methylation of ribose moieties in rRNA and tRNA. Site specificity is provided by a guide RNA that base pairs with the substrate. Methylation occurs at a characteristic distance from the sequence involved in base pairing with the guide RNA. In Methanosarcina mazei (strain ATCC BAA-159 / DSM 3647 / Goe1 / Go1 / JCM 11833 / OCM 88) (Methanosarcina frisia), this protein is Fibrillarin-like rRNA/tRNA 2'-O-methyltransferase.